We begin with the raw amino-acid sequence, 660 residues long: Bifunctional polymyxin resistance protein ArnA (660 aa).

A formyltransferase ArnAFT region spans residues 1-304 (MKAVVFAYHD…TLGLVAGARL (304 aa)). Residue His-104 is the Proton donor; for formyltransferase activity of the active site. (6R)-10-formyltetrahydrofolate contacts are provided by residues Arg-114 and 136-140 (VKRAD). The dehydrogenase ArnADH stretch occupies residues 314–660 (RRTRVLILGV…QSVEPGDAEE (347 aa)). NAD(+) is bound by residues Asp-347 and 368–369 (DI). UDP-alpha-D-glucuronate is bound by residues Ala-393, Tyr-398, and 432-433 (TS). The Proton acceptor; for decarboxylase activity role is filled by Glu-434. Residues Arg-460, Asn-492, 526–535 (KLIDGGRQKR), and Tyr-613 contribute to the UDP-alpha-D-glucuronate site. Arg-619 serves as the catalytic Proton donor; for decarboxylase activity.

This sequence in the N-terminal section; belongs to the Fmt family. UDP-L-Ara4N formyltransferase subfamily. It in the C-terminal section; belongs to the NAD(P)-dependent epimerase/dehydratase family. UDP-glucuronic acid decarboxylase subfamily. As to quaternary structure, homohexamer, formed by a dimer of trimers.

The enzyme catalyses UDP-alpha-D-glucuronate + NAD(+) = UDP-beta-L-threo-pentopyranos-4-ulose + CO2 + NADH. It catalyses the reaction UDP-4-amino-4-deoxy-beta-L-arabinose + (6R)-10-formyltetrahydrofolate = UDP-4-deoxy-4-formamido-beta-L-arabinose + (6S)-5,6,7,8-tetrahydrofolate + H(+). Its pathway is nucleotide-sugar biosynthesis; UDP-4-deoxy-4-formamido-beta-L-arabinose biosynthesis; UDP-4-deoxy-4-formamido-beta-L-arabinose from UDP-alpha-D-glucuronate: step 1/3. The protein operates within nucleotide-sugar biosynthesis; UDP-4-deoxy-4-formamido-beta-L-arabinose biosynthesis; UDP-4-deoxy-4-formamido-beta-L-arabinose from UDP-alpha-D-glucuronate: step 3/3. It participates in bacterial outer membrane biogenesis; lipopolysaccharide biosynthesis. Bifunctional enzyme that catalyzes the oxidative decarboxylation of UDP-glucuronic acid (UDP-GlcUA) to UDP-4-keto-arabinose (UDP-Ara4O) and the addition of a formyl group to UDP-4-amino-4-deoxy-L-arabinose (UDP-L-Ara4N) to form UDP-L-4-formamido-arabinose (UDP-L-Ara4FN). The modified arabinose is attached to lipid A and is required for resistance to polymyxin and cationic antimicrobial peptides. This Erwinia tasmaniensis (strain DSM 17950 / CFBP 7177 / CIP 109463 / NCPPB 4357 / Et1/99) protein is Bifunctional polymyxin resistance protein ArnA.